The sequence spans 2601 residues: Centrosomal protein of 295 kDa (2601 aa).

The interval 1 to 560 is necessary for centriole targeting and microtubule association; that stretch reads MKRKVVNTHK…KKTQPTGVGI (560 aa). Serine 14 is subject to Phosphoserine. 2 coiled-coil regions span residues 207-273 and 500-552; these read KRPD…EDLA and AARI…KRKK. Serine 654 and serine 938 each carry phosphoserine. A disordered region spans residues 1008–1029; sequence PSADTKSGKIQEQHSSKSEKGL. The span at 1013–1027 shows a compositional bias: basic and acidic residues; sequence KSGKIQEQHSSKSEK. Coiled coils occupy residues 1053 to 1082 and 1498 to 1544; these read LHDS…VELL and IQSH…VSSE. The tract at residues 1558 to 1580 is disordered; the sequence is ADSERTQKSFPTKSNDTLPSSHR. Over residues 1565–1577 the composition is skewed to polar residues; it reads KSFPTKSNDTLPS. Serine 1637 carries the phosphoserine modification. Residues 1728 to 1758 are a coiled coil; the sequence is QEKLLVQRQTALQQQIQKHEETLKDFFKDSQ. Composition is skewed to basic and acidic residues over residues 1795–1827, 1985–2003, and 2100–2112; these read RHAD…DLGR, FSEH…KEEE, and DNRD…DSSS. Disordered regions lie at residues 1795–1834, 1979–2004, and 2085–2117; these read RHAD…KPPV, LTDP…EEET, and HPDF…SHCA. Threonine 2473 carries the phosphothreonine modification. The tract at residues 2478 to 2601 is ALMS motif; that stretch reads SLQEAFIKRK…LEKLRAKNTC (124 aa). A coiled-coil region spans residues 2556 to 2581; it reads RLYNQLAEVKQQKEEKTKQEAYAQNR.

In terms of assembly, interacts (via ALMS motif) with microtubules; this interaction is direct.

The protein resides in the cytoplasm. It is found in the cytoskeleton. Its subcellular location is the microtubule organizing center. It localises to the centrosome. The protein localises to the centriole. The protein resides in the spindle. Its function is as follows. Centriole-enriched microtubule-binding protein involved in centriole biogenesis. Essential for the generation of the distal portion of new-born centrioles in a CPAP- and CEP120-mediated elongation dependent manner during the cell cycle S/G2 phase after formation of the initiating cartwheel structure. Required for the recruitment of centriolar proteins, such as POC1B, POC5 and CEP135, into the distal portion of centrioles. Also required for centriole-to-centrosome conversion during mitotic progression, but is dispensable for cartwheel removal or centriole disengagement. Binds to and stabilizes centriolar microtubule. May be involved in ciliogenesis. This Homo sapiens (Human) protein is Centrosomal protein of 295 kDa.